The primary structure comprises 152 residues: Deoxyuridine 5'-triphosphate nucleotidohydrolase (152 aa).

Substrate contacts are provided by residues 71 to 73, asparagine 84, 88 to 90, and methionine 98; these read RSG and LID.

This sequence belongs to the dUTPase family. The cofactor is Mg(2+).

The catalysed reaction is dUTP + H2O = dUMP + diphosphate + H(+). Its pathway is pyrimidine metabolism; dUMP biosynthesis; dUMP from dCTP (dUTP route): step 2/2. Its function is as follows. This enzyme is involved in nucleotide metabolism: it produces dUMP, the immediate precursor of thymidine nucleotides and it decreases the intracellular concentration of dUTP so that uracil cannot be incorporated into DNA. This Aeromonas hydrophila subsp. hydrophila (strain ATCC 7966 / DSM 30187 / BCRC 13018 / CCUG 14551 / JCM 1027 / KCTC 2358 / NCIMB 9240 / NCTC 8049) protein is Deoxyuridine 5'-triphosphate nucleotidohydrolase.